A 103-amino-acid polypeptide reads, in one-letter code: Small ribosomal subunit protein uS10 (103 aa).

The protein belongs to the universal ribosomal protein uS10 family. As to quaternary structure, part of the 30S ribosomal subunit.

Its function is as follows. Involved in the binding of tRNA to the ribosomes. This chain is Small ribosomal subunit protein uS10, found in Novosphingobium aromaticivorans (strain ATCC 700278 / DSM 12444 / CCUG 56034 / CIP 105152 / NBRC 16084 / F199).